The primary structure comprises 409 residues: Methylthioribose-1-phosphate isomerase (409 aa).

Aspartate 277 serves as the catalytic Proton donor.

Belongs to the eIF-2B alpha/beta/delta subunits family. MtnA subfamily.

The protein localises to the cytoplasm. It localises to the nucleus. The catalysed reaction is 5-(methylsulfanyl)-alpha-D-ribose 1-phosphate = 5-(methylsulfanyl)-D-ribulose 1-phosphate. It participates in amino-acid biosynthesis; L-methionine biosynthesis via salvage pathway; L-methionine from S-methyl-5-thio-alpha-D-ribose 1-phosphate: step 1/6. Catalyzes the interconversion of methylthioribose-1-phosphate (MTR-1-P) into methylthioribulose-1-phosphate (MTRu-1-P). The polypeptide is Methylthioribose-1-phosphate isomerase (Scheffersomyces stipitis (strain ATCC 58785 / CBS 6054 / NBRC 10063 / NRRL Y-11545) (Yeast)).